The chain runs to 237 residues: Riboflavin kinase (237 aa).

The unknown stretch occupies residues 1-101 (MRLKIKAIWV…SRIFSSEPDV (101 aa)). Residues 102–237 (LELEGNVLKG…VKKQGMEGQK (136 aa)) form a riboflavin kinase region. 111–116 (GLGEGQ) is a binding site for CDP. Mg(2+)-binding residues include Thr-140 and Asn-142. 2 residues coordinate FMN: Thr-197 and Glu-205. Position 210-213 (210-213 (VKLR)) interacts with CDP.

This sequence belongs to the archaeal riboflavin kinase family. It depends on Mg(2+) as a cofactor.

It catalyses the reaction riboflavin + CTP = CDP + FMN + H(+). The protein operates within cofactor biosynthesis; FMN biosynthesis; FMN from riboflavin (CTP route): step 1/1. In terms of biological role, catalyzes the CTP-dependent phosphorylation of riboflavin (vitamin B2) to form flavin mononucleotide (FMN). This Methanosarcina acetivorans (strain ATCC 35395 / DSM 2834 / JCM 12185 / C2A) protein is Riboflavin kinase (ribK).